Consider the following 260-residue polypeptide: uncharacterized protein (260 aa).

The 228-residue stretch at 4-231 (LHVDHVTHTY…PKELAAMLPF (228 aa)) folds into the ABC transporter domain. Residue 40-47 (GPSGCGKT) participates in ATP binding.

It belongs to the ABC transporter superfamily.

This is an uncharacterized protein from Bacillus subtilis (strain 168).